Reading from the N-terminus, the 309-residue chain is Taste receptor type 2 member 124 (309 aa).

Residues 1–7 are Extracellular-facing; the sequence is MVPVLHS. Residues 8 to 28 traverse the membrane as a helical segment; sequence LSTIILIAEFVWGNLSNGLIV. At 29 to 46 the chain is on the cytoplasmic side; the sequence is LKNCIDWINKKELSTVDQ. Residues 47 to 67 traverse the membrane as a helical segment; sequence ILIVLAISRISLIWETLIIWV. Topologically, residues 68–86 are extracellular; sequence KDQLISSITIEELKIIVFS. A helical transmembrane segment spans residues 87–107; it reads FILSSHFSLWLATALSIFYLF. Residues 108-127 lie on the Cytoplasmic side of the membrane; sequence RIPNCYWQIFLYLKWRIKQL. The helical transmembrane segment at 128–148 threads the bilayer; sequence IVHMLLGSLVFLVANMIQITI. Residues 149 to 183 are Extracellular-facing; that stretch reads TLEERFYQYGGNTSVNSMETEFSILIELMLFNMTM. Asn-160 and Asn-180 each carry an N-linked (GlcNAc...) asparagine glycan. Residues 184–204 traverse the membrane as a helical segment; sequence FSIIPFSLALISFLLLIFSLW. The Cytoplasmic segment spans residues 205–230; sequence KHLQKMPLNSRGDRDPSATAHRNALR. Residues 231–251 traverse the membrane as a helical segment; the sequence is ILVSFLLLYTIYFLSLLISWV. At 252–261 the chain is on the extracellular side; that stretch reads AQKNQSELVH. A glycan (N-linked (GlcNAc...) asparagine) is linked at Asn-255. Residues 262–282 traverse the membrane as a helical segment; sequence IICMITSLVYPSFHSYILILG. The Cytoplasmic segment spans residues 283–309; that stretch reads NYKLKQTSLWVMRQLGCRMKRQNTPTT.

It belongs to the G-protein coupled receptor T2R family.

The protein localises to the membrane. Functionally, putative taste receptor which may play a role in the perception of bitterness. This chain is Taste receptor type 2 member 124, found in Mus musculus (Mouse).